Consider the following 406-residue polypeptide: Interactor protein for cytohesin exchange factors 1 (406 aa).

Residues 13-112 (HADCQGWLYK…WLNKLGFAVT (100 aa)) enclose the PH domain. Disordered regions lie at residues 118–173 (TKDE…FSSL), 228–285 (CRVS…EDDE), and 383–406 (PQDP…ENSL). Residues 123–134 (CYSESEQEDPET) show a composition bias toward acidic residues. A compositionally biased stretch (low complexity) spans 144 to 160 (ASATSSPVAARRASSSS). Polar residues predominate over residues 228-239 (CRVSENSSTTPE). Positions 243–259 (LNSLSSDDTSSLNNSQD) are enriched in low complexity. The segment covering 272-285 (MTDRDEIKSSEDDE) has biased composition (basic and acidic residues). The interval 285 to 406 (EMEKLYKSLE…TSSDCVENSL (122 aa)) is necessary for interaction with PSCD2 and to translocate to the plasma membrane. Polar residues predominate over residues 392-406 (EIMNPTSSDCVENSL).

In terms of assembly, interacts with guanine-nucleotide exchange factors PSCD1, PSCD2, PSCD3 and PSCD4. In terms of tissue distribution, expressed in brain, spleen, lung, testis and kidney.

The protein resides in the cytoplasm. Its subcellular location is the cell membrane. Functionally, enhances the promotion of guanine-nucleotide exchange by PSCD2 on ARF6 in a concentration-dependent manner. This is Interactor protein for cytohesin exchange factors 1 (Ipcef1) from Rattus norvegicus (Rat).